The chain runs to 235 residues: Urease accessory protein UreF (235 aa).

The protein belongs to the UreF family. UreD, UreF and UreG form a complex that acts as a GTP-hydrolysis-dependent molecular chaperone, activating the urease apoprotein by helping to assemble the nickel containing metallocenter of UreC. The UreE protein probably delivers the nickel.

It localises to the cytoplasm. In terms of biological role, required for maturation of urease via the functional incorporation of the urease nickel metallocenter. The chain is Urease accessory protein UreF from Ureaplasma urealyticum serovar 10 (strain ATCC 33699 / Western).